Here is a 271-residue protein sequence, read N- to C-terminus: Ubiquitin thioesterase OTUB1 (271 aa).

An N-acetylalanine modification is found at Ala-2. Position 16 is a phosphoserine (Ser-16). Tyr-26 is modified (phosphotyrosine; by SRC). One can recognise an OTU domain in the interval 80–271 (SYIRKTRPDG…RPGHYDILYK (192 aa)). Asp-88 is a catalytic residue. Cys-91 functions as the Nucleophile in the catalytic mechanism. 2 ubiquitin-conjugating enzyme E2 binding regions span residues 130-138 (FTEFTIEDF) and 169-177 (DYLVVYLRL). The interval 189 to 195 (FFEHFIE) is free ubiquitin binding. A ubiquitin-conjugating enzyme E2 binding region spans residues 206–213 (QEVEPMCK). 2 free ubiquitin binding regions span residues 214–221 (ESDHIHII) and 245–251 (NPHIFPE). The active site involves His-265.

This sequence belongs to the peptidase C65 family. In terms of assembly, interacts with FUS and RACK1. Interacts with UBE2D1/UBCH5A, UBE2W/UBC16 and UBE2N/UBC13. As to quaternary structure, interacts with RNF128. Forms a ternary complex with RNF128 and USP8. Interacts with the C-terminal UCH catalytic domain of USP8. Interacts with RNF128. Does not associate with USP8. Post-translationally, phosphorylation at Tyr-26 by SRC and SRMS promotes deubiquitination of RPTOR via a non-catalytic process. As to expression, isoform 1 is ubiquitous. Isoform 2 is expressed only in lymphoid tissues such as tonsils, lymph nodes and spleen, as well as peripheral blood mononuclear cells.

The protein resides in the cytoplasm. The enzyme catalyses Thiol-dependent hydrolysis of ester, thioester, amide, peptide and isopeptide bonds formed by the C-terminal Gly of ubiquitin (a 76-residue protein attached to proteins as an intracellular targeting signal).. By free ubiquitin: binding of free ubiquitin triggers conformational changes in the OTU domain and formation of a ubiquitin-binding helix in the N-terminus, promoting binding of the conjugated donor ubiquitin in UBE2N/UBC13 to OTUB1. In terms of biological role, hydrolase that can specifically remove 'Lys-48'-linked conjugated ubiquitin from proteins and plays an important regulatory role at the level of protein turnover by preventing degradation. Regulator of T-cell anergy, a phenomenon that occurs when T-cells are rendered unresponsive to antigen rechallenge and no longer respond to their cognate antigen. Acts via its interaction with RNF128/GRAIL, a crucial inductor of CD4 T-cell anergy. Isoform 1 destabilizes RNF128, leading to prevent anergy. In contrast, isoform 2 stabilizes RNF128 and promotes anergy. Surprisingly, it regulates RNF128-mediated ubiquitination, but does not deubiquitinate polyubiquitinated RNF128. Deubiquitinates estrogen receptor alpha (ESR1). Mediates deubiquitination of 'Lys-48'-linked polyubiquitin chains, but not 'Lys-63'-linked polyubiquitin chains. Not able to cleave di-ubiquitin. Also capable of removing NEDD8 from NEDD8 conjugates, but with a much lower preference compared to 'Lys-48'-linked ubiquitin. Plays a key non-catalytic role in DNA repair regulation by inhibiting activity of RNF168, an E3 ubiquitin-protein ligase that promotes accumulation of 'Lys-63'-linked histone H2A and H2AX at DNA damage sites. Inhibits RNF168 independently of ubiquitin thioesterase activity by binding and inhibiting UBE2N/UBC13, the E2 partner of RNF168, thereby limiting spreading of 'Lys-63'-linked histone H2A and H2AX marks. Inhibition occurs by binding to free ubiquitin: free ubiquitin acts as an allosteric regulator that increases affinity for UBE2N/UBC13 and disrupts interaction with UBE2V1. The OTUB1-UBE2N/UBC13-free ubiquitin complex adopts a configuration that mimics a cleaved 'Lys48'-linked di-ubiquitin chain. Acts as a regulator of mTORC1 and mTORC2 complexes. When phosphorylated at Tyr-26, acts as an activator of the mTORC1 complex by mediating deubiquitination of RPTOR via a non-catalytic process: acts by binding and inhibiting the activity of the ubiquitin-conjugating enzyme E2 (UBE2D1/UBCH5A, UBE2W/UBC16 and UBE2N/UBC13), thereby preventing ubiquitination of RPTOR. Can also act as an inhibitor of the mTORC1 and mTORC2 complexes in response to amino acids by mediating non-catalytic deubiquitination of DEPTOR. In Homo sapiens (Human), this protein is Ubiquitin thioesterase OTUB1 (OTUB1).